The primary structure comprises 182 residues: Plasmolipin (182 aa).

Topologically, residues 1–35 (MAEFPSKVSTRTSSPAQGAEASVSALRPDLGFVRS) are cytoplasmic. At Ser-9 the chain carries Phosphoserine. Residues 32-166 (FVRSRLGALM…SAFFSYQAWR (135 aa)) form the MARVEL domain. A helical transmembrane segment spans residues 36-56 (RLGALMLLQLVLGLLVWALIA). Over 57-68 (DTPYHLYPAYGW) the chain is Extracellular. The chain crosses the membrane as a helical span at residues 69-89 (VMFVAVFLWLVTIVLFNLYLF). Residues 90–99 (QLHMKLYMVP) lie on the Cytoplasmic side of the membrane. The helical transmembrane segment at 100–120 (WPLVLMIFNISATVLYITAFI) threads the bilayer. At 121–141 (ACSAAVDLTSLRGTRPYNQRA) the chain is on the extracellular side. Residues 142 to 162 (AASFFACLVMIAYGVSAFFSY) traverse the membrane as a helical segment. The Cytoplasmic portion of the chain corresponds to 163-182 (QAWRGVGSNAATSQMAGGYA).

The protein belongs to the MAL family. Forms oligomers. Phosphorylated.

It is found in the cell membrane. It localises to the myelin membrane. The protein localises to the apical cell membrane. The protein resides in the golgi apparatus. Functionally, main component of the myelin sheath that plays an important role in myelin membrane biogenesis and myelination. Plays an essential function in apical endocytosis. Regulates epithelial development through the regulation of apical endocytosis. Part of the intracellular machinery that mediates basolateral-to-apical transport of ICAM-1, an essential adhesion receptor in epithelial cells, from the subapical compartment in hepatic epithelial cells. In Homo sapiens (Human), this protein is Plasmolipin.